The chain runs to 30 residues: Trypsin inhibitor 4 (30 aa).

3 disulfide bridges follow: cysteine 3–cysteine 20, cysteine 10–cysteine 22, and cysteine 16–cysteine 28.

Belongs to the protease inhibitor I7 (squash-type serine protease inhibitor) family.

It localises to the secreted. In terms of biological role, inhibits trypsin; probably participates in a plant defense mechanism. This Momordica charantia (Bitter gourd) protein is Trypsin inhibitor 4.